The sequence spans 310 residues: p-hydroxybenzoic acid efflux pump subunit AaeA (310 aa).

The chain crosses the membrane as a helical span at residues 12–32 (AITVILVILAFVAIFRAWVYY).

This sequence belongs to the membrane fusion protein (MFP) (TC 8.A.1) family.

The protein localises to the cell inner membrane. Forms an efflux pump with AaeB. The chain is p-hydroxybenzoic acid efflux pump subunit AaeA from Klebsiella pneumoniae (strain 342).